Reading from the N-terminus, the 238-residue chain is 4-hydroxy-tetrahydrodipicolinate reductase (238 aa).

Residue 12 to 17 (GASGRM) participates in NAD(+) binding. Arginine 40 serves as a coordination point for NADP(+). NAD(+) is bound by residues 93–95 (GTT) and 117–120 (ASNF). Histidine 149 acts as the Proton donor/acceptor in catalysis. Histidine 150 is a (S)-2,3,4,5-tetrahydrodipicolinate binding site. Lysine 153 functions as the Proton donor in the catalytic mechanism. Residue 159-160 (GT) participates in (S)-2,3,4,5-tetrahydrodipicolinate binding.

Belongs to the DapB family.

Its subcellular location is the cytoplasm. It carries out the reaction (S)-2,3,4,5-tetrahydrodipicolinate + NAD(+) + H2O = (2S,4S)-4-hydroxy-2,3,4,5-tetrahydrodipicolinate + NADH + H(+). The enzyme catalyses (S)-2,3,4,5-tetrahydrodipicolinate + NADP(+) + H2O = (2S,4S)-4-hydroxy-2,3,4,5-tetrahydrodipicolinate + NADPH + H(+). It functions in the pathway amino-acid biosynthesis; L-lysine biosynthesis via DAP pathway; (S)-tetrahydrodipicolinate from L-aspartate: step 4/4. Catalyzes the conversion of 4-hydroxy-tetrahydrodipicolinate (HTPA) to tetrahydrodipicolinate. This is 4-hydroxy-tetrahydrodipicolinate reductase from Xanthomonas axonopodis pv. citri (strain 306).